We begin with the raw amino-acid sequence, 400 residues long: Serine/threonine transporter SstT (400 aa).

9 helical membrane-spanning segments follow: residues 9 to 29 (LVTQ…VWPA), 36 to 56 (ILGS…VFVL), 75 to 95 (VLVL…VASM), 134 to 154 (ALLE…GLAL), 175 to 195 (VIQL…ASTF), 209 to 229 (LLAV…PLIV), 281 to 301 (IAIP…ISVL), 323 to 343 (VVAS…LLLI), and 349 to 369 (LFGI…IIGI).

Belongs to the dicarboxylate/amino acid:cation symporter (DAACS) (TC 2.A.23) family.

It localises to the cell inner membrane. The catalysed reaction is L-serine(in) + Na(+)(in) = L-serine(out) + Na(+)(out). The enzyme catalyses L-threonine(in) + Na(+)(in) = L-threonine(out) + Na(+)(out). In terms of biological role, involved in the import of serine and threonine into the cell, with the concomitant import of sodium (symport system). The chain is Serine/threonine transporter SstT from Acidovorax sp. (strain JS42).